We begin with the raw amino-acid sequence, 268 residues long: 4-pyridoxolactonase (268 aa).

Zn(2+) is bound by residues H96, H98, D100, H101, H185, D207, and H252. Catalysis depends on D100, which acts as the Proton donor/acceptor.

It belongs to the metallo-beta-lactamase superfamily. As to quaternary structure, homodimer. It depends on Zn(2+) as a cofactor.

It carries out the reaction 4-pyridoxolactone + H2O = 4-pyridoxate + H(+). It functions in the pathway cofactor degradation; B6 vitamer degradation; 4-pyridoxate from pyridoxal: step 2/2. Inhibited by Hg(2+). In terms of biological role, involved in the degradation of pyridoxine or pyridoxamine (free, phosphate-unbound, forms of vitamin B6). Hydrolyzes 4-pyridoxolactone to 4-pyridoxic acid. Has lower activity toward N-hexanoyl-D,L-homoserine lactone, but is not active toward 5-pyridoxolactone and gamma-butyrolactone. This Mesorhizobium japonicum (strain LMG 29417 / CECT 9101 / MAFF 303099) (Mesorhizobium loti (strain MAFF 303099)) protein is 4-pyridoxolactonase.